A 210-amino-acid polypeptide reads, in one-letter code: Protoporphyrinogen IX oxidase (210 aa).

5 consecutive transmembrane segments (helical) span residues 22–42 (WFKA…FYLV), 74–94 (YNII…GLIF), 103–123 (GWLH…FYCG), 141–161 (FRAL…LAVF), and 165–185 (LPLD…AASI). Residue His27 coordinates heme. Heme is bound at residue Lys108.

This sequence belongs to the HemJ family. As to quaternary structure, homodimer. Can also form higher oligomers, most probably tetramers. Interacts with Sll1106, however it is unlikely that Sll1106 is required for PPO function. The cofactor is heme b.

Its subcellular location is the cell membrane. The catalysed reaction is protoporphyrinogen IX + 3 A = protoporphyrin IX + 3 AH2. Its pathway is porphyrin-containing compound metabolism; protoporphyrin-IX biosynthesis; protoporphyrin-IX from protoporphyrinogen-IX: step 1/1. Its function is as follows. Catalyzes the oxidation of protoporphyrinogen IX to protoporphyrin IX. Is involved in the biosynthesis of tetrapyrrole molecules like heme and chlorophyll. Does not use oxygen or artificial electron acceptors such as menadione or benzoquinone. Is functionally coupled with coproporphyrinogen III oxidase (CPO). Is essential for growth. This chain is Protoporphyrinogen IX oxidase, found in Synechocystis sp. (strain ATCC 27184 / PCC 6803 / Kazusa).